The sequence spans 208 residues: Small ribosomal subunit protein uS3 (208 aa).

The KH type-2 domain occupies 16–85; the sequence is IDEYFKKELS…KPQIDVKPVE (70 aa).

The protein belongs to the universal ribosomal protein uS3 family. Part of the 30S ribosomal subunit.

Binds the lower part of the 30S subunit head. This is Small ribosomal subunit protein uS3 from Methanocaldococcus jannaschii (strain ATCC 43067 / DSM 2661 / JAL-1 / JCM 10045 / NBRC 100440) (Methanococcus jannaschii).